The chain runs to 178 residues: MALNLSQKQEVVAELADIAAKAHSLIAAEYAGTTVAQMTAMRKQARETGVFLKVVKNTLASRAVEGTEFAVAQDQMVGPLLYAFSLEEPGAAGRLIKEAAKGNDKLKAKVVAIGGEVFPASHVDVLASLPTRDQALAMLARVLTEPVTMFARAIKAIGDKQNGGDVAADAAEPAAETA.

This sequence belongs to the universal ribosomal protein uL10 family. As to quaternary structure, part of the ribosomal stalk of the 50S ribosomal subunit. The N-terminus interacts with L11 and the large rRNA to form the base of the stalk. The C-terminus forms an elongated spine to which L12 dimers bind in a sequential fashion forming a multimeric L10(L12)X complex.

Functionally, forms part of the ribosomal stalk, playing a central role in the interaction of the ribosome with GTP-bound translation factors. The chain is Large ribosomal subunit protein uL10 from Stenotrophomonas maltophilia (strain R551-3).